Reading from the N-terminus, the 2774-residue chain is MDVKDRRHRSLTRGRCGKECRYTSSSLDSEDCRVPTQKSYSSSETLKAYDHDSRMHYGNRVTDLIHRESDEFPRQGTNFTLAELGICEPSPHRSGYCSDMGILHQGYSLSTGSDADSDTEGGMSPEHAIRLWGRGIKSRRSSGLSSRENSALTLTDSDNENKSDDENGRPIPPTSSPSLLPSAQLPSSHNPPPVSCQMPLLDSNTSHQIMDTNPDEEFSPNSYLLRACSGPQQASSSGPPNHHSQSTLRPPLPPPHNHTLSHHHSSANSLNRNSLTNRRSQIHAPAPAPNDLATTPESVQLQDSWVLNSNVPLETRHFLFKTSSGSTPLFSSSSPGYPLTSGTVYTPPPRLLPRNTFSRKAFKLKKPSKYCSWKCAALSAIAAALLLAILLAYFIAMHLLGLNWQLQPADGHTFNNGIRTGLPGNDDVATMPSGGKVPWSLKNSSIDSGEAEVGRRVTQEVPPGVFWRSQIHISQPQFLKFNISLGKDALFGVYIRRGLPPSHAQYDFMERLDGKEKWSVVESPRERRSIQTLVQNEAVFVQYLDVGLWHLAFYNDGKDKEMVSFNTVVLDSVQDCPRNCHGNGECVSGVCHCFPGFLGADCAKAACPVLCSGNGQYSKGTCQCYSGWKGAECDVPMNQCIDPSCGGHGSCIDGNCVCSAGYKGEHCEEVDCLDPTCSSHGVCVNGECLCSPGWGGLNCELARVQCPDQCSGHGTYLPDTGLCSCDPNWMGPDCSVEVCSVDCGTHGVCIGGACRCEEGWTGAACDQRVCHPRCIEHGTCKDGKCECREGWNGEHCTIGRQTAGTETDGCPDLCNGNGRCTLGQNSWQCVCQTGWRGPGCNVAMETSCADNKDNEGDGLVDCLDPDCCLQSACQNSLLCRGSRDPLDIIQQGQTDWPAVKSFYDRIKLLAGKDSTHIIPGENPFNSSLVSLIRGQVVTTDGTPLVGVNVSFVKYPKYGYTITRQDGTFDLIANGGASLTLHFERAPFMSQERTVWLPWNSFYAMDTLVMKTEENSIPSCDLSGFVRPDPIIISSPLSTFFSAAPGQNPIVPETQVLHEEIELPGSNVKLRYLSSRTAGYKSLLKITMTQSTVPLNLIRVHLMVAVEGHLFQKSFQASPNLAYTFIWDKTDAYGQRVYGLSDAVVSVGFEYETCPSLILWEKRTALLQGFELDPSNLGGWSLDKHHILNVKSGILHKGTGENQFLTQQPAIITSIMGNGRRRSISCPSCNGLAEGNKLLAPVALAVGIDGSLYVGDFNYIRRIFPSRNVTSILELRNKEFKHSNNPAHKYYLAVDPVSGSLYVSDTNSRRIYRVKSLSGTKDLAGNSEVVAGTGEQCLPFDEARCGDGGKAIDATLMSPRGIAVDKNGLMYFVDATMIRKVDQNGIISTLLGSNDLTAVRPLSCDSSMDVAQVRLEWPTDLAVNPMDNSLYVLENNVILRITENHQVSIIAGRPMHCQVPGIDYSLSKLAIHSALESASAIAISHTGVLYITETDEKKINRLRQVTTNGEICLLAGAASDCDCKNDVNCNCYSGDDAYATDAILNSPSSLAVAPDGTIYIADLGNIRIRAVSKNKPVLNAFNQYEAASPGEQELYVFNADGIHQYTVSLVTGEYLYNFTYSTDNDVTELIDNNGNSLKIRRDSSGMPRHLLMPDNQIITLTVGTNGGLKVVSTQNLELGLMTYDGNTGLLATKSDETGWTTFYDYDHEGRLTNVTRPTGVVTSLHREMEKSITIDIENSNRDDDVTVITNLSSVEASYTVVQDQVRNSYQLCNNGTLRVMYANGMGISFHSEPHVLAGTITPTIGRCNISLPMENGLNSIEWRLRKEQIKGKVTIFGRKLRVHGRNLLSIDYDRNIRTEKIYDDHRKFTLRIIYDQVGRPFLWLPSSGLAAVNVSYFFNGRLAGLQRGAMSERTDIDKQGRIVSRMFADGKVWSYSYLDKSMVLLLQSQRQYIFEYDSSDRLLAVTMPSVARHSMSTHTSIGYIRNIYNPPESNASVIFDYSDDGRILKTSFLGTGRQVFYKYGKLSKLSEIVYDSTAVTFGYDETTGVLKMVNLQSGGFSCTIRYRKIGPLVDKQIYRFSEEGMVNARFDYTYHDNSFRIASIKPVISETPLPVDLYRYDEISGKVEHFGKFGVIYYDINQIITTAVMTLSKHFDTHGRIKEVQYEMFRSLMYWMTVQYDSMGRVIKRELKLGPYANTTKYTYDYDGDGQLQSVAVNDRPTWRYSYDLNGNLHLLNPGNSVRLMPLRYDLRDRITRLGDVQYKIDDDGYLCQRGSDIFEYNSKGLLTRAYNKASGWSVQYRYDGVGRRASYKTNLGHHLQYFYSDLHNPTRITHVYNHSNSEITSLYYDLQGHLFAMESSSGEEYYVASDNTGTPLAVFSINGLMIKQLQYTAYGEIYYDSNPDFQMVIGFHGGLYDPLTKLVHFTQRDYDVLAGRWTSPDYTMWKNVGKEPAPFNLYMFKSNNPLSSELDLKNYVTDVKSWLVMFGFQLSNIIPGFPRAKMYFVPPPYELSESQASENGQLITGVQQTTERHNQAFMALEGQVITKKLHASIREKAGHWFATTTPIIGKGIMFAIKEGRVTTGVSSIASEDSRKVASVLNNAYYLDKMHYSIEGKDTHYFVKIGSADGDLVTLGTTIGRKVLESGVNVTVSQPTLLVNGRTRRFTNIEFQYSTLLLSIRYGLTPDTLDEEKARVLDQARQRALGTAWAKEQQKARDGREGSRLWTEGEKQQLLSTGRVQGYEGYYVLPVEQYPELADSSSNIQFLRQNEMGKR.

One can recognise a Teneurin N-terminal domain in the interval 1–375 (MDVKDRRHRS…KPSKYCSWKC (375 aa)). Topologically, residues 1–379 (MDVKDRRHRS…YCSWKCAALS (379 aa)) are cytoplasmic. Phosphoserine is present on residues serine 90 and serine 124. The segment at 111–271 (TGSDADSDTE…HHHSSANSLN (161 aa)) is disordered. A compositionally biased stretch (polar residues) spans 141 to 155 (SSGLSSRENSALTLT). At threonine 155 the chain carries Phosphothreonine. A Phosphoserine modification is found at serine 157. A compositionally biased stretch (basic and acidic residues) spans 159-168 (NENKSDDENG). The segment covering 176–188 (SPSLLPSAQLPSS) has biased composition (low complexity). The span at 202–211 (DSNTSHQIMD) shows a compositional bias: polar residues. Residues 229–240 (SGPQQASSSGPP) are compositionally biased toward low complexity. A helical membrane pass occupies residues 380 to 400 (AIAAALLLAILLAYFIAMHLL). Residues 401 to 2774 (GLNWQLQPAD…FLRQNEMGKR (2374 aa)) lie on the Extracellular side of the membrane. N-linked (GlcNAc...) asparagine glycosylation is found at asparagine 443 and asparagine 482. EGF-like domains follow at residues 575 to 603 (DCPRNCHGNGECVSGVCHCFPGFLGADCA), 598 to 634 (LGADCAKAACPVLCSGNGQYSKGTCQCYSGWKGAECD), 636 to 668 (PMNQCIDPSCGGHGSCIDGNCVCSAGYKGEHCE), 669 to 701 (EVDCLDPTCSSHGVCVNGECLCSPGWGGLNCEL), 702 to 735 (ARVQCPDQCSGHGTYLPDTGLCSCDPNWMGPDCS), 738 to 766 (VCSVDCGTHGVCIGGACRCEEGWTGAACD), 769 to 797 (VCHPRCIEHGTCKDGKCECREGWNGEHCT), and 808 to 841 (DGCPDLCNGNGRCTLGQNSWQCVCQTGWRGPGCN). Cystine bridges form between cysteine 576–cysteine 586, cysteine 580–cysteine 591, cysteine 593–cysteine 602, cysteine 611–cysteine 622, cysteine 624–cysteine 633, cysteine 640–cysteine 651, cysteine 645–cysteine 656, cysteine 658–cysteine 667, cysteine 672–cysteine 683, cysteine 677–cysteine 688, cysteine 690–cysteine 699, cysteine 710–cysteine 723, cysteine 725–cysteine 734, cysteine 739–cysteine 749, cysteine 743–cysteine 754, cysteine 756–cysteine 765, cysteine 770–cysteine 780, cysteine 774–cysteine 785, cysteine 787–cysteine 796, cysteine 810–cysteine 820, cysteine 814–cysteine 829, and cysteine 831–cysteine 840. Residues asparagine 925, asparagine 948, and asparagine 1267 are each glycosylated (N-linked (GlcNAc...) asparagine). NHL repeat units follow at residues 1272-1316 (LELR…VKSL), 1342-1386 (ARCG…NGII), 1401-1452 (LSCD…IAGR), 1474-1501 (LESASAIAISHTGVLYITETDEKKINRL), and 1530-1573 (CYSG…VSKN). The YD 1 repeat unit spans residues 1583–1602 (YEAASPGEQELYVFNADGIH). Asparagine 1616 is a glycosylation site (N-linked (GlcNAc...) asparagine). YD repeat units follow at residues 1619–1639 (YSTDNDVTELIDNNGNSLKIR), 1682–1701 (YDGNTGLLATKSDETGWTTF), and 1702–1724 (YDYDHEGRLTNVTRPTGVVTSLH). N-linked (GlcNAc...) asparagine glycosylation is found at asparagine 1712, asparagine 1749, asparagine 1773, asparagine 1807, and asparagine 1892. 18 YD repeats span residues 1895 to 1914 (YFFNGRLAGLQRGAMSERTD), 1936 to 1954 (YLDKSMVLLLQSQRQYIFE), 1955 to 1975 (YDSSDRLLAVTMPSVARHSMS), 1982 to 1999 (YIRNIYNPPESNASVIFD), 2000 to 2021 (YSDDGRILKTSFLGTGRQVFYK), 2022 to 2039 (YGKLSKLSEIVYDSTAVT), 2042 to 2062 (YDETTGVLKMVNLQSGGFSCT), 2065 to 2085 (YRKIGPLVDKQIYRFSEEGMV), 2093 to 2113 (YHDNSFRIASIKPVISETPLP), 2119 to 2136 (YDEISGKVEHFGKFGVIY), 2137 to 2163 (YDINQIITTAVMTLSKHFDTHGRIKEV), 2165 to 2178 (YEMFRSLMYWMTVQ), 2179 to 2202 (YDSMGRVIKRELKLGPYANTTKYT), 2205 to 2225 (YDGDGQLQSVAVNDRPTWRYS), 2226 to 2246 (YDLNGNLHLLNPGNSVRLMPL), 2248 to 2268 (YDLRDRITRLGDVQYKIDDDG), 2280 to 2300 (YNSKGLLTRAYNKASGWSVQY), and 2302 to 2322 (YDGVGRRASYKTNLGHHLQYF). Asparagine 1993 carries N-linked (GlcNAc...) asparagine glycosylation. The N-linked (GlcNAc...) asparagine glycan is linked to asparagine 2197. The N-linked (GlcNAc...) asparagine glycan is linked to asparagine 2337. One copy of the YD 23 repeat lies at 2348 to 2389 (YDLQGHLFAMESSSGEEYYVASDNTGTPLAVFSINGLMIKQL). Residue asparagine 2648 is glycosylated (N-linked (GlcNAc...) asparagine).

It belongs to the tenascin family. Teneurin subfamily. In terms of assembly, homodimer; disulfide-linked. Heterodimer with either TENM1 or TENM3. May also form heterodimer with TENM4. Isoform 2 (C-terminal globular domain) interacts with ADGRL1 isoform 2. Derives from the membrane form by proteolytic processing. In terms of processing, derives from the plasma membrane form by proteolytic cleavage and translocates to the nucleus. Homophilic binding of the C-terminal extracellular domain stimulates its proteolytic cleavage and release in the cytoplasmic. Is subjected to rapid degradation by the proteasome pathway. Highly expressed in heart, followed by brain, liver, kidney and fetal brain and weakly expressed in lung and testis. No expression was detected in skeletal muscle, pancreas, spleen, ovary and fetal liver.

The protein resides in the cell membrane. It is found in the presynaptic cell membrane. It localises to the postsynaptic cell membrane. Its subcellular location is the endoplasmic reticulum. The protein localises to the golgi apparatus. The protein resides in the synapse. It is found in the cell projection. It localises to the dendritic spine. Its subcellular location is the filopodium. The protein localises to the growth cone. The protein resides in the nucleus. It is found in the PML body. In terms of biological role, involved in neural development, regulating the establishment of proper connectivity within the nervous system. Acts as a ligand of the ADGRL1 and ADGRL3 receptors that are expressed at the surface of adjacent cells. Promotes the formation of filopodia and enlarged growth cone in neuronal cells. Mediates axon guidance and homophilic and heterophilic cell-cell adhesion. May function as a cellular signal transducer. Acts as a ligand of the ADGRL1 receptor. Mediates axon guidance and heterophilic cell-cell adhesion. Functionally, induces gene transcription inhibition. The protein is Teneurin-2 (TENM2) of Homo sapiens (Human).